The chain runs to 544 residues: Bacillolysin (544 aa).

An N-terminal signal peptide occupies residues Met-1–Ala-25. Positions Lys-26 to Pro-225 are cleaved as a propeptide — activation peptide. Ca(2+) is bound by residues Asp-285, Asp-287, Gln-289, and Asp-366. His-370 is a binding site for Zn(2+). The active site involves Glu-371. Residues His-374 and Glu-394 each coordinate Zn(2+). Ca(2+) contacts are provided by Glu-405, Asn-411, Asp-413, Glu-415, Glu-418, Tyr-421, Thr-422, Val-425, and Asp-428. His-459 (proton donor) is an active-site residue.

This sequence belongs to the peptidase M4 family. Ca(2+) serves as cofactor. It depends on Zn(2+) as a cofactor.

It is found in the secreted. The enzyme catalyses Similar, but not identical, to that of thermolysin.. Functionally, extracellular zinc metalloprotease. The protein is Bacillolysin (npr) of Bacillus caldolyticus.